We begin with the raw amino-acid sequence, 348 residues long: tRNA N6-adenosine threonylcarbamoyltransferase (348 aa).

His-115 and His-119 together coordinate Fe cation. Substrate-binding positions include 138-142 (LVSGG), Asp-171, Gly-184, and Asn-278. Asp-306 contributes to the Fe cation binding site.

Belongs to the KAE1 / TsaD family. Fe(2+) serves as cofactor.

Its subcellular location is the cytoplasm. The catalysed reaction is L-threonylcarbamoyladenylate + adenosine(37) in tRNA = N(6)-L-threonylcarbamoyladenosine(37) in tRNA + AMP + H(+). Its function is as follows. Required for the formation of a threonylcarbamoyl group on adenosine at position 37 (t(6)A37) in tRNAs that read codons beginning with adenine. Is involved in the transfer of the threonylcarbamoyl moiety of threonylcarbamoyl-AMP (TC-AMP) to the N6 group of A37, together with TsaE and TsaB. TsaD likely plays a direct catalytic role in this reaction. The sequence is that of tRNA N6-adenosine threonylcarbamoyltransferase from Methylibium petroleiphilum (strain ATCC BAA-1232 / LMG 22953 / PM1).